A 234-amino-acid polypeptide reads, in one-letter code: NAD-dependent protein deacylase (234 aa).

The Deacetylase sirtuin-type domain occupies 1-234; sequence MKNLVVLTGA…ELKQLLIPAP (234 aa). 9 to 28 contacts NAD(+); it reads GAGMSAESGISTFRDAGGLW. Substrate contacts are provided by Tyr53 and Arg56. 86–89 provides a ligand contact to NAD(+); sequence QNVD. His104 functions as the Proton acceptor in the catalytic mechanism. 175–177 lines the NAD(+) pocket; the sequence is GTS.

It belongs to the sirtuin family. Class III subfamily.

The protein localises to the cytoplasm. It catalyses the reaction N(6)-acetyl-L-lysyl-[protein] + NAD(+) + H2O = 2''-O-acetyl-ADP-D-ribose + nicotinamide + L-lysyl-[protein]. The catalysed reaction is N(6)-succinyl-L-lysyl-[protein] + NAD(+) + H2O = 2''-O-succinyl-ADP-D-ribose + nicotinamide + L-lysyl-[protein]. NAD-dependent lysine deacetylase and desuccinylase that specifically removes acetyl and succinyl groups on target proteins. Modulates the activities of several proteins which are inactive in their acylated form. The chain is NAD-dependent protein deacylase from Bacteroides thetaiotaomicron (strain ATCC 29148 / DSM 2079 / JCM 5827 / CCUG 10774 / NCTC 10582 / VPI-5482 / E50).